The chain runs to 202 residues: V-type ATP synthase subunit D (202 aa).

It belongs to the V-ATPase D subunit family.

Functionally, produces ATP from ADP in the presence of a proton gradient across the membrane. The sequence is that of V-type ATP synthase subunit D (atpD) from Borreliella burgdorferi (strain ATCC 35210 / DSM 4680 / CIP 102532 / B31) (Borrelia burgdorferi).